Reading from the N-terminus, the 237-residue chain is MARRPRPAGSEPDSGIPHIVELVRSTIPPIHPAGLPFIAGGLGLAGLGVRNRWVRGTGLALAGACAGFFRHPPRVPPNRADVVVAAADGQVCLVDRAVPPPELGLPAEPLPRISIFLSVFDVHVQRVPVAGEATAVIHRSGQFLSADRAEASVANERNSVQIRTRTGHDVIVVQIAGLIARRIVCHAKVGDQLSIGDTYGLIRFGSRVDTYLPEGSKILVQQGQRAVGAETVLAELP.

Ser206 acts as the Schiff-base intermediate with substrate; via pyruvic acid in catalysis. Residue Ser206 is modified to Pyruvic acid (Ser); by autocatalysis.

This sequence belongs to the phosphatidylserine decarboxylase family. PSD-A subfamily. In terms of assembly, heterodimer of a large membrane-associated beta subunit and a small pyruvoyl-containing alpha subunit. It depends on pyruvate as a cofactor. In terms of processing, is synthesized initially as an inactive proenzyme. Formation of the active enzyme involves a self-maturation process in which the active site pyruvoyl group is generated from an internal serine residue via an autocatalytic post-translational modification. Two non-identical subunits are generated from the proenzyme in this reaction, and the pyruvate is formed at the N-terminus of the alpha chain, which is derived from the carboxyl end of the proenzyme. The post-translation cleavage follows an unusual pathway, termed non-hydrolytic serinolysis, in which the side chain hydroxyl group of the serine supplies its oxygen atom to form the C-terminus of the beta chain, while the remainder of the serine residue undergoes an oxidative deamination to produce ammonia and the pyruvoyl prosthetic group on the alpha chain.

It is found in the cell membrane. The enzyme catalyses a 1,2-diacyl-sn-glycero-3-phospho-L-serine + H(+) = a 1,2-diacyl-sn-glycero-3-phosphoethanolamine + CO2. It functions in the pathway phospholipid metabolism; phosphatidylethanolamine biosynthesis; phosphatidylethanolamine from CDP-diacylglycerol: step 2/2. In terms of biological role, catalyzes the formation of phosphatidylethanolamine (PtdEtn) from phosphatidylserine (PtdSer). In Mycobacteroides abscessus (strain ATCC 19977 / DSM 44196 / CCUG 20993 / CIP 104536 / JCM 13569 / NCTC 13031 / TMC 1543 / L948) (Mycobacterium abscessus), this protein is Phosphatidylserine decarboxylase proenzyme.